The sequence spans 414 residues: Putative nickel insertion protein (414 aa).

Residues alanine 70–proline 91 form a disordered region.

It belongs to the LarC family.

The polypeptide is Putative nickel insertion protein (Picosynechococcus sp. (strain ATCC 27264 / PCC 7002 / PR-6) (Agmenellum quadruplicatum)).